We begin with the raw amino-acid sequence, 141 residues long: Large ribosomal subunit protein uL11 (141 aa).

Belongs to the universal ribosomal protein uL11 family. Part of the ribosomal stalk of the 50S ribosomal subunit. Interacts with L10 and the large rRNA to form the base of the stalk. L10 forms an elongated spine to which L12 dimers bind in a sequential fashion forming a multimeric L10(L12)X complex. In terms of processing, one or more lysine residues are methylated.

Functionally, forms part of the ribosomal stalk which helps the ribosome interact with GTP-bound translation factors. This is Large ribosomal subunit protein uL11 from Thermotoga neapolitana (strain ATCC 49049 / DSM 4359 / NBRC 107923 / NS-E).